The sequence spans 418 residues: CinA-like protein (418 aa).

The protein belongs to the CinA family.

The chain is CinA-like protein from Cytophaga hutchinsonii (strain ATCC 33406 / DSM 1761 / CIP 103989 / NBRC 15051 / NCIMB 9469 / D465).